A 396-amino-acid polypeptide reads, in one-letter code: MAKLIVSDLDVKDKKVLIRVDFNVPIKDGVIGDDNRIVAALPTIQYVIDHGGKAILLSHLGRVKTEEDKAKLTLKPVAERLSELLKKPVTFVPATRGKELEDAINKMNDGDVLVMENTRFEDLDGKKESGNDPELGKYWASLGDLFVNDAFGTAHRSHASNVGIASNMKQTAAGFLMEKEIKFLGDAVDNPKHPFIAILGGAKVSDKIGVIENLVPKADKILIGGGMTYTFYAAKGMSIGKSLVEKDKIELAKKIMDQAGDKLLLPVDSVVATEFSNDAPHKVVDGDIPDGYMALDIGPKTIKEFKDALQGAKTVVWNGPMGVFEMSNYAEGTLEVGRALGDLKDATTIIGGGDSTAAAKQLGIAPKITHISTGGGASLEYLEGKTLPGIAAISDK.

Substrate-binding positions include Asp21–Asn23, Arg36, His59–Arg62, Arg119, and Arg156. ATP contacts are provided by residues Lys207, Glu325, and Gly352–Ser355.

It belongs to the phosphoglycerate kinase family. As to quaternary structure, monomer.

The protein localises to the cytoplasm. The enzyme catalyses (2R)-3-phosphoglycerate + ATP = (2R)-3-phospho-glyceroyl phosphate + ADP. The protein operates within carbohydrate degradation; glycolysis; pyruvate from D-glyceraldehyde 3-phosphate: step 2/5. The polypeptide is Phosphoglycerate kinase (Lacticaseibacillus casei (strain BL23) (Lactobacillus casei)).